The chain runs to 119 residues: MARVTVEDCVEKVPNRFALVLLSAHRARGISAGASLLVDRDNDKNPVVALREIADDVVDHEGLREQLITTLQRVDEHTEAEEEAETLALLADPTHMQMSELELVRALQSDRDGGQEERY.

This sequence belongs to the RNA polymerase subunit omega family. In terms of assembly, the RNAP catalytic core consists of 2 alpha, 1 beta, 1 beta' and 1 omega subunit. When a sigma factor is associated with the core the holoenzyme is formed, which can initiate transcription.

The enzyme catalyses RNA(n) + a ribonucleoside 5'-triphosphate = RNA(n+1) + diphosphate. Functionally, promotes RNA polymerase assembly. Latches the N- and C-terminal regions of the beta' subunit thereby facilitating its interaction with the beta and alpha subunits. The chain is DNA-directed RNA polymerase subunit omega from Caulobacter sp. (strain K31).